Here is a 171-residue protein sequence, read N- to C-terminus: Large ribosomal subunit protein bL9 (171 aa).

It belongs to the bacterial ribosomal protein bL9 family.

Functionally, binds to the 23S rRNA. In Rickettsia rickettsii (strain Iowa), this protein is Large ribosomal subunit protein bL9.